The sequence spans 745 residues: uncharacterized protein (745 aa).

Residues 158-256 (NQVCDYIELH…HQTPKQYRGD (99 aa)) form the HTH araC/xylS-type domain. DNA-binding regions (H-T-H motif) lie at residues 175–196 (SELS…AESL) and 223–246 (ITDI…KHFT).

This is an uncharacterized protein from Staphylococcus aureus (strain MRSA252).